Consider the following 166-residue polypeptide: NAD(P)H-quinone oxidoreductase subunit I, chloroplastic (166 aa).

2 4Fe-4S ferredoxin-type domains span residues 55–84 (GRIHFEFDKCIACEVCVRVCPIDLPVVDWK) and 95–124 (LNYSIDFGICIFCGNCVEYCPTNCLSMTEE). Cys-64, Cys-67, Cys-70, Cys-74, Cys-104, Cys-107, Cys-110, and Cys-114 together coordinate [4Fe-4S] cluster.

The protein belongs to the complex I 23 kDa subunit family. In terms of assembly, NDH is composed of at least 16 different subunits, 5 of which are encoded in the nucleus. [4Fe-4S] cluster serves as cofactor.

It localises to the plastid. The protein resides in the chloroplast thylakoid membrane. The catalysed reaction is a plastoquinone + NADH + (n+1) H(+)(in) = a plastoquinol + NAD(+) + n H(+)(out). It carries out the reaction a plastoquinone + NADPH + (n+1) H(+)(in) = a plastoquinol + NADP(+) + n H(+)(out). Its function is as follows. NDH shuttles electrons from NAD(P)H:plastoquinone, via FMN and iron-sulfur (Fe-S) centers, to quinones in the photosynthetic chain and possibly in a chloroplast respiratory chain. The immediate electron acceptor for the enzyme in this species is believed to be plastoquinone. Couples the redox reaction to proton translocation, and thus conserves the redox energy in a proton gradient. The sequence is that of NAD(P)H-quinone oxidoreductase subunit I, chloroplastic from Encelia californica (Bush sunflower).